A 122-amino-acid chain; its full sequence is Large ribosomal subunit protein bL12 (122 aa).

The protein belongs to the bacterial ribosomal protein bL12 family. As to quaternary structure, homodimer. Part of the ribosomal stalk of the 50S ribosomal subunit. Forms a multimeric L10(L12)X complex, where L10 forms an elongated spine to which 2 to 4 L12 dimers bind in a sequential fashion. Binds GTP-bound translation factors.

Forms part of the ribosomal stalk which helps the ribosome interact with GTP-bound translation factors. Is thus essential for accurate translation. The protein is Large ribosomal subunit protein bL12 of Streptococcus thermophilus (strain ATCC BAA-491 / LMD-9).